Here is a 195-residue protein sequence, read N- to C-terminus: Dynactin subunit 6 (195 aa).

The protein belongs to the dynactin subunits 5/6 family. Dynactin subunit 6 subfamily. Member of the pointed-end complex of the dynactin shoulder complex which contains dctn4, dctn5 and dctn6 subunits and Actr10. Within the complex dctn6 forms a heterodimer with dctn5. Interacts with plk1.

Its subcellular location is the cytoplasm. It is found in the cytoskeleton. The protein resides in the chromosome. The protein localises to the centromere. It localises to the kinetochore. In terms of biological role, part of the dynactin complex that activates the molecular motor dynein for ultra-processive transport along microtubules. This is Dynactin subunit 6 (dctn6) from Danio rerio (Zebrafish).